A 183-amino-acid chain; its full sequence is uncharacterized protein (183 aa).

The protein belongs to the EUO family.

This is an uncharacterized protein from Chlamydia trachomatis serovar D (strain ATCC VR-885 / DSM 19411 / UW-3/Cx).